The following is a 160-amino-acid chain: MGKIELQLKATLENVTNLRPVGEDFRWYLKMKCGNCGEISEKWQYIRLMDSVALKGGRGSASMVQKCKLCSRENSIEILSSTIKSYNAEDNEKFKTIVEFECRGLEPVDFQPQAGFAAEGVESGTVFSDINLQEKDWTDYDEKAQESVGIYEVTHQFVKC.

Residues cysteine 33, cysteine 36, cysteine 67, and cysteine 70 each coordinate Zn(2+). Position 75 is a phosphoserine (serine 75).

It belongs to the UPF0587 family. In terms of assembly, monomer.

The sequence is that of CXXC motif containing zinc binding protein (CZIB) from Bos taurus (Bovine).